A 1117-amino-acid chain; its full sequence is PR domain zinc finger protein 10 (1117 aa).

The interval 97-142 is disordered; sequence QQTPLGGLEAKEEEDEDEDEDTEEDEEEDGEDADLDDWEPDPPRPF. Acidic residues predominate over residues 107–136; it reads KEEEDEDEDEDTEEDEEEDGEDADLDDWEP. Positions 182–300 constitute an SET domain; the sequence is LPLVLYIDRF…PKQELKVWYA (119 aa). An N-terminal PR domain; essential for transcriptional activator activity region spans residues 201 to 305; the sequence is IPKRTQLGPV…KVWYAASYAE (105 aa). The C2H2-type 1 zinc-finger motif lies at 329 to 351; it reads WPCYECNRRFISSEQLQQHLNSH. Residue Lys-354 forms a Glycyl lysine isopeptide (Lys-Gly) (interchain with G-Cter in SUMO2) linkage. Positions 361 to 381 are enriched in basic residues; that stretch reads TRGRGRGRGKRRFGPGRRPGR. A disordered region spans residues 361 to 386; that stretch reads TRGRGRGRGKRRFGPGRRPGRPPKFI. Ser-398 bears the Phosphoserine mark. Thr-402 is subject to Phosphothreonine. Residues 440–474 form a disordered region; sequence QETQSSLEHEPETHTLHLQPQHEESVVPTQSTLTA. The span at 446–464 shows a compositional bias: basic and acidic residues; it reads LEHEPETHTLHLQPQHEES. C2H2-type zinc fingers lie at residues 500–522, 530–552, 558–580, 586–609, 614–636, 642–665, 697–720, 742–765, and 804–827; these read FKCL…LRFH, LTCD…MKLH, YSCI…VAIH, FTCP…RSFH, YQCT…MLRH, FLCS…QRMH, FKCR…SKRH, YFCQ…LKNH, and VCCP…RKKH. Positions 871–1097 are C-terminal glutamine-rich region; essential for transcriptional activator activity; sequence QAMTELSQTL…QTTSQQQTTQ (227 aa). Disordered regions lie at residues 919–943, 958–1001, and 1066–1094; these read VAPA…DPQP, GQPL…SSVQ, and QTSA…SQQQ. Polar residues predominate over residues 924 to 934; that stretch reads SPHQSQQSTVD.

This sequence belongs to the class V-like SAM-binding methyltransferase superfamily.

It is found in the nucleus. Transcriptional activator, essential for early embryonic development and survival of embryonic stem cells (ESCs). Supports cell growth and survival during early development by transcriptionally activating the expression of the translation initiation factor EIF3B, to sustain global translation. Activates the transcription of FLNC. This is PR domain zinc finger protein 10 (PRDM10) from Pongo abelii (Sumatran orangutan).